Consider the following 320-residue polypeptide: Alpha/beta hydrolase domain-containing protein 17C (320 aa).

Positions 50–75 (RAPAPAATPAPAPAAQPAPAEEGAGP) are disordered. Positions 55 to 65 (AATPAPAPAAQ) are enriched in pro residues. Active-site charge relay system residues include serine 202, aspartate 267, and histidine 296.

It belongs to the AB hydrolase superfamily. ABHD17 family. In terms of processing, palmitoylated on cysteine residues located in a cysteine cluster at the N-terminus which promotes membrane localization. Palmitoylation is required for post-synaptic localization and for depalmitoylating activity towards DLG4/PSD95.

The protein resides in the recycling endosome membrane. It is found in the cell projection. The protein localises to the dendritic spine. It localises to the postsynaptic density membrane. The enzyme catalyses S-hexadecanoyl-L-cysteinyl-[protein] + H2O = L-cysteinyl-[protein] + hexadecanoate + H(+). In terms of biological role, hydrolyzes fatty acids from S-acylated cysteine residues in proteins. Has depalmitoylating activity towards DLG4/PSD95. In Mus musculus (Mouse), this protein is Alpha/beta hydrolase domain-containing protein 17C.